Consider the following 495-residue polypeptide: ATP synthase subunit beta, chloroplastic (495 aa).

172–179 is an ATP binding site; that stretch reads GGAGVGKT.

It belongs to the ATPase alpha/beta chains family. As to quaternary structure, F-type ATPases have 2 components, CF(1) - the catalytic core - and CF(0) - the membrane proton channel. CF(1) has five subunits: alpha(3), beta(3), gamma(1), delta(1), epsilon(1). CF(0) has four main subunits: a(1), b(1), b'(1) and c(9-12).

It is found in the plastid. It localises to the chloroplast thylakoid membrane. It carries out the reaction ATP + H2O + 4 H(+)(in) = ADP + phosphate + 5 H(+)(out). Functionally, produces ATP from ADP in the presence of a proton gradient across the membrane. The catalytic sites are hosted primarily by the beta subunits. This Barnardia japonica (Chinese squill) protein is ATP synthase subunit beta, chloroplastic.